We begin with the raw amino-acid sequence, 240 residues long: 4-hydroxy-tetrahydrodipicolinate reductase (240 aa).

Residues 8-13 (GSTGKM), 78-80 (GTT), and 102-105 (SANM) each bind NAD(+). Histidine 134 functions as the Proton donor/acceptor in the catalytic mechanism. Histidine 135 provides a ligand contact to (S)-2,3,4,5-tetrahydrodipicolinate. The active-site Proton donor is the lysine 138. Residue 144–145 (GT) participates in (S)-2,3,4,5-tetrahydrodipicolinate binding.

It belongs to the DapB family.

The protein localises to the cytoplasm. It carries out the reaction (S)-2,3,4,5-tetrahydrodipicolinate + NAD(+) + H2O = (2S,4S)-4-hydroxy-2,3,4,5-tetrahydrodipicolinate + NADH + H(+). The enzyme catalyses (S)-2,3,4,5-tetrahydrodipicolinate + NADP(+) + H2O = (2S,4S)-4-hydroxy-2,3,4,5-tetrahydrodipicolinate + NADPH + H(+). It participates in amino-acid biosynthesis; L-lysine biosynthesis via DAP pathway; (S)-tetrahydrodipicolinate from L-aspartate: step 4/4. Catalyzes the conversion of 4-hydroxy-tetrahydrodipicolinate (HTPA) to tetrahydrodipicolinate. The chain is 4-hydroxy-tetrahydrodipicolinate reductase from Rickettsia canadensis (strain McKiel).